A 350-amino-acid chain; its full sequence is Gene 40 protein (350 aa).

237–244 (AVKESGKT) serves as a coordination point for ATP.

In Bacillus phage SP01 (Bacteriophage SP01), this protein is Gene 40 protein (40).